Consider the following 85-residue polypeptide: Anti-neuroexcitation peptide 2 (85 aa).

A signal peptide spans 1-21 (MKLSLLLVISASMLIDGLVNA). The LCN-type CS-alpha/beta domain occupies 22–82 (DGYIRGSNGC…TWKSESNTCG (61 aa)). Cystine bridges form between Cys31–Cys81, Cys35–Cys56, Cys42–Cys63, and Cys46–Cys65.

It belongs to the long (4 C-C) scorpion toxin superfamily. Sodium channel inhibitor family. Beta subfamily. In terms of tissue distribution, expressed by the venom gland.

Its subcellular location is the secreted. In terms of biological role, binds to sodium channels (Nav) and inhibits them. Recombinant ANEP delays the convulsion seizure of insect models by 18% and shows anti-neuroexcitatory activity. This Olivierus martensii (Manchurian scorpion) protein is Anti-neuroexcitation peptide 2.